The primary structure comprises 124 residues: Small ribosomal subunit protein uS11 (124 aa).

It belongs to the universal ribosomal protein uS11 family. As to quaternary structure, part of the 30S ribosomal subunit. Interacts with proteins S7 and S18. Binds to IF-3.

Located on the platform of the 30S subunit, it bridges several disparate RNA helices of the 16S rRNA. Forms part of the Shine-Dalgarno cleft in the 70S ribosome. The protein is Small ribosomal subunit protein uS11 of Anaplasma phagocytophilum (strain HZ).